The chain runs to 176 residues: Small ribosomal subunit protein uS5 (176 aa).

An S5 DRBM domain is found at 18-81 (FEEKMLFVNR…SIARKNMISV (64 aa)).

Belongs to the universal ribosomal protein uS5 family. In terms of assembly, part of the 30S ribosomal subunit. Contacts proteins S4 and S8.

In terms of biological role, with S4 and S12 plays an important role in translational accuracy. Functionally, located at the back of the 30S subunit body where it stabilizes the conformation of the head with respect to the body. This chain is Small ribosomal subunit protein uS5, found in Deinococcus deserti (strain DSM 17065 / CIP 109153 / LMG 22923 / VCD115).